The chain runs to 151 residues: Large ribosomal subunit protein uL16 (151 aa).

It belongs to the universal ribosomal protein uL16 family. Part of the 50S ribosomal subunit.

Its function is as follows. Binds 23S rRNA and is also seen to make contacts with the A and possibly P site tRNAs. In Chloroflexus aurantiacus (strain ATCC 29364 / DSM 637 / Y-400-fl), this protein is Large ribosomal subunit protein uL16.